A 173-amino-acid polypeptide reads, in one-letter code: Probable F-box protein At1g27490 (173 aa).

One can recognise an F-box domain in the interval 1 to 46 (MEWSLPVDLQEEILSRVPAKSLARWKSTPKQWKGPISIEFLHLLRS).

This chain is Probable F-box protein At1g27490, found in Arabidopsis thaliana (Mouse-ear cress).